The chain runs to 102 residues: Large ribosomal subunit protein bL21 (102 aa).

The protein belongs to the bacterial ribosomal protein bL21 family. In terms of assembly, part of the 50S ribosomal subunit. Contacts protein L20.

This protein binds to 23S rRNA in the presence of protein L20. The chain is Large ribosomal subunit protein bL21 from Bacillus anthracis (strain A0248).